Reading from the N-terminus, the 1331-residue chain is DNA-directed RNA polymerase subunit beta' (1331 aa).

Positions 60, 62, 75, and 78 each coordinate Zn(2+). D535, D537, and D539 together coordinate Mg(2+). The Zn(2+) site is built by C902, C979, C986, and C989.

It belongs to the RNA polymerase beta' chain family. The RNAP catalytic core consists of 2 alpha, 1 beta, 1 beta' and 1 omega subunit. When a sigma factor is associated with the core the holoenzyme is formed, which can initiate transcription. It depends on Mg(2+) as a cofactor. Zn(2+) serves as cofactor.

The catalysed reaction is RNA(n) + a ribonucleoside 5'-triphosphate = RNA(n+1) + diphosphate. Its function is as follows. DNA-dependent RNA polymerase catalyzes the transcription of DNA into RNA using the four ribonucleoside triphosphates as substrates. This is DNA-directed RNA polymerase subunit beta' from Corynebacterium aurimucosum (strain ATCC 700975 / DSM 44827 / CIP 107346 / CN-1) (Corynebacterium nigricans).